A 239-amino-acid polypeptide reads, in one-letter code: Protein TrbH (239 aa).

The helical transmembrane segment at 208-228 (TVVSIICLLMWICLVYIHCGI) threads the bilayer.

It is found in the cell inner membrane. The sequence is that of Protein TrbH (trbH) from Escherichia coli (strain K12).